Here is a 286-residue protein sequence, read N- to C-terminus: Probable endonuclease 4 (286 aa).

Zn(2+) is bound by residues His67, His107, Glu144, Asp178, His181, His215, Asp228, His230, and Glu260.

This sequence belongs to the AP endonuclease 2 family. Requires Zn(2+) as cofactor.

It carries out the reaction Endonucleolytic cleavage to 5'-phosphooligonucleotide end-products.. In terms of biological role, endonuclease IV plays a role in DNA repair. It cleaves phosphodiester bonds at apurinic or apyrimidinic (AP) sites, generating a 3'-hydroxyl group and a 5'-terminal sugar phosphate. This Chloroflexus aggregans (strain MD-66 / DSM 9485) protein is Probable endonuclease 4.